The sequence spans 325 residues: Beta-ketoacyl-[acyl-carrier-protein] synthase III (325 aa).

Residues cysteine 119 and histidine 252 contribute to the active site. Residues 253–257 form an ACP-binding region; sequence QANIR. The active site involves asparagine 282.

This sequence belongs to the thiolase-like superfamily. FabH family. In terms of assembly, homodimer.

It localises to the cytoplasm. The enzyme catalyses malonyl-[ACP] + acetyl-CoA + H(+) = 3-oxobutanoyl-[ACP] + CO2 + CoA. It participates in lipid metabolism; fatty acid biosynthesis. Catalyzes the condensation reaction of fatty acid synthesis by the addition to an acyl acceptor of two carbons from malonyl-ACP. Catalyzes the first condensation reaction which initiates fatty acid synthesis and may therefore play a role in governing the total rate of fatty acid production. Possesses both acetoacetyl-ACP synthase and acetyl transacylase activities. Its substrate specificity determines the biosynthesis of branched-chain and/or straight-chain of fatty acids. This is Beta-ketoacyl-[acyl-carrier-protein] synthase III from Acidovorax ebreus (strain TPSY) (Diaphorobacter sp. (strain TPSY)).